The primary structure comprises 447 residues: Na(+)-translocating NADH-quinone reductase subunit A (447 aa).

The protein belongs to the NqrA family. As to quaternary structure, composed of six subunits; NqrA, NqrB, NqrC, NqrD, NqrE and NqrF.

It carries out the reaction a ubiquinone + n Na(+)(in) + NADH + H(+) = a ubiquinol + n Na(+)(out) + NAD(+). NQR complex catalyzes the reduction of ubiquinone-1 to ubiquinol by two successive reactions, coupled with the transport of Na(+) ions from the cytoplasm to the periplasm. NqrA to NqrE are probably involved in the second step, the conversion of ubisemiquinone to ubiquinol. This is Na(+)-translocating NADH-quinone reductase subunit A from Yersinia pestis bv. Antiqua (strain Angola).